The chain runs to 129 residues: Phosphoribosyl-AMP cyclohydrolase (129 aa).

Asp-94 serves as a coordination point for Mg(2+). Cys-95 contacts Zn(2+). Asp-96 and Asp-98 together coordinate Mg(2+). 2 residues coordinate Zn(2+): Cys-111 and Cys-118.

This sequence belongs to the PRA-CH family. In terms of assembly, homodimer. It depends on Mg(2+) as a cofactor. Zn(2+) is required as a cofactor.

Its subcellular location is the cytoplasm. It catalyses the reaction 1-(5-phospho-beta-D-ribosyl)-5'-AMP + H2O = 1-(5-phospho-beta-D-ribosyl)-5-[(5-phospho-beta-D-ribosylamino)methylideneamino]imidazole-4-carboxamide. Its pathway is amino-acid biosynthesis; L-histidine biosynthesis; L-histidine from 5-phospho-alpha-D-ribose 1-diphosphate: step 3/9. Its function is as follows. Catalyzes the hydrolysis of the adenine ring of phosphoribosyl-AMP. The chain is Phosphoribosyl-AMP cyclohydrolase from Corynebacterium efficiens (strain DSM 44549 / YS-314 / AJ 12310 / JCM 11189 / NBRC 100395).